The following is a 1624-amino-acid chain: Reverse gyrase (1624 aa).

Residues 1–42 (MKAIYRGMCPNCRGAITDERLSNKNPCEGCLSEPILSEDYNE) form an RG N-terminal-type zinc finger. Zn(2+) is bound by residues Cys9, Cys12, Cys27, and Cys30. ATP is bound by residues Gln89 and 106 to 113 (APTGMGKS). The region spanning 93-256 (VKRIIRGKSF…KLKKQLAKLL (164 aa)) is the Helicase ATP-binding domain. The DEAD box motif lies at 213–216 (DDVD). Positions 636 to 1624 (DLVKSALMIV…LYEEIKRYVR (989 aa)) are topoisomerase I. Residues 640–803 (SALMIVESPN…NIKRIEFHEV (164 aa)) form the Toprim domain. Glu646 contributes to the Mg(2+) binding site. The RG C-terminal-type zinc-finger motif lies at 720–749 (IKRCRDCGHQFVDWEQKGVCPRCGSRNVHD). The Zn(2+) site is built by Cys723, Cys726, Cys739, and Cys742. Asp772 is a Mg(2+) binding site. Positions 819 to 1623 (NEDRVNAQLV…ELYEEIKRYV (805 aa)) constitute a Topo IA-type catalytic domain. The DOD-type homing endonuclease domain maps to 1107-1222 (IFGVILGKGT…LSVYLYQIGI (116 aa)). The active-site O-(5'-phospho-DNA)-tyrosine intermediate is the Tyr1366.

This sequence in the N-terminal section; belongs to the DEAD box helicase family. DDVD subfamily. In the C-terminal section; belongs to the type IA topoisomerase family. As to quaternary structure, monomer. The cofactor is Zn(2+). Mg(2+) is required as a cofactor. In terms of processing, this protein undergoes a protein self splicing that involves a post-translational excision of the intervening region (intein) followed by peptide ligation.

It is found in the cytoplasm. It catalyses the reaction ATP + H2O = ADP + phosphate + H(+). Functionally, modifies the topological state of DNA by introducing positive supercoils in an ATP-dependent process, increasing the linking number in steps of +1. Binds to single-stranded DNA, transiently cleaves and then rejoins the ends, introducing a positive supercoil in the process. The scissile phosphodiester is attacked by the catalytic tyrosine of the enzyme, resulting in the formation of a DNA-(5'-phosphotyrosyl)-enzyme intermediate. Probably involved in rewinding DNA strands in regions of the chromosome that have opened up to allow replication, transcription, DNA repair and/or for DNA protection. The sequence is that of Reverse gyrase from Pyrococcus horikoshii (strain ATCC 700860 / DSM 12428 / JCM 9974 / NBRC 100139 / OT-3).